The primary structure comprises 217 residues: Monomethylamine corrinoid protein 2 (217 aa).

The B12-binding N-terminal domain occupies 1–91 (MTNTEIFEKL…ELEKSKVEGE (91 aa)). In terms of domain architecture, B12-binding spans 93–217 (TGLAITFVAE…AAKVALNIMK (125 aa)). Residue His106 coordinates methylcob(III)alamin.

The protein belongs to the methylamine corrinoid protein family. Can form a complex with MtmB.

The protein operates within one-carbon metabolism; methanogenesis from methylamine. In terms of biological role, acts as a methyl group carrier between MtmB and MtbA. This is Monomethylamine corrinoid protein 2 (mtmC2) from Methanosarcina acetivorans (strain ATCC 35395 / DSM 2834 / JCM 12185 / C2A).